The primary structure comprises 315 residues: Methionyl-tRNA formyltransferase (315 aa).

117–120 serves as a coordination point for (6S)-5,6,7,8-tetrahydrofolate; that stretch reads SLLP.

The protein belongs to the Fmt family.

It carries out the reaction L-methionyl-tRNA(fMet) + (6R)-10-formyltetrahydrofolate = N-formyl-L-methionyl-tRNA(fMet) + (6S)-5,6,7,8-tetrahydrofolate + H(+). Attaches a formyl group to the free amino group of methionyl-tRNA(fMet). The formyl group appears to play a dual role in the initiator identity of N-formylmethionyl-tRNA by promoting its recognition by IF2 and preventing the misappropriation of this tRNA by the elongation apparatus. This Methylibium petroleiphilum (strain ATCC BAA-1232 / LMG 22953 / PM1) protein is Methionyl-tRNA formyltransferase.